Reading from the N-terminus, the 273-residue chain is Octanoyl-[GcvH]:protein N-octanoyltransferase (273 aa).

Residues Ala-40–Thr-245 enclose the BPL/LPL catalytic domain. Cys-144 functions as the Acyl-thioester intermediate in the catalytic mechanism.

It belongs to the octanoyltransferase LipL family.

It catalyses the reaction N(6)-octanoyl-L-lysyl-[glycine-cleavage complex H protein] + L-lysyl-[lipoyl-carrier protein] = N(6)-octanoyl-L-lysyl-[lipoyl-carrier protein] + L-lysyl-[glycine-cleavage complex H protein]. It participates in protein modification; protein lipoylation via endogenous pathway; protein N(6)-(lipoyl)lysine from octanoyl-[acyl-carrier-protein]. Catalyzes the amidotransfer (transamidation) of the octanoyl moiety from octanoyl-GcvH to the lipoyl domain of the E2 subunit of lipoate-dependent enzymes. The sequence is that of Octanoyl-[GcvH]:protein N-octanoyltransferase from Exiguobacterium sibiricum (strain DSM 17290 / CCUG 55495 / CIP 109462 / JCM 13490 / 255-15).